The chain runs to 77 residues: Acyl carrier protein (77 aa).

The Carrier domain maps to 1-76; sequence MSLEDDVKAI…DVIKYIQERQ (76 aa). Ser36 carries the post-translational modification O-(pantetheine 4'-phosphoryl)serine.

It belongs to the acyl carrier protein (ACP) family. In terms of processing, 4'-phosphopantetheine is transferred from CoA to a specific serine of apo-ACP by AcpS. This modification is essential for activity because fatty acids are bound in thioester linkage to the sulfhydryl of the prosthetic group.

The protein localises to the cytoplasm. The protein operates within lipid metabolism; fatty acid biosynthesis. In terms of biological role, carrier of the growing fatty acid chain in fatty acid biosynthesis. This is Acyl carrier protein from Chlamydia trachomatis serovar A (strain ATCC VR-571B / DSM 19440 / HAR-13).